Consider the following 539-residue polypeptide: Chaperonin GroEL (539 aa).

ATP contacts are provided by residues 29 to 32, 86 to 90, Gly413, 477 to 479, and Asp493; these read TLGP, DGTTT, and NAA.

Belongs to the chaperonin (HSP60) family. As to quaternary structure, forms a cylinder of 14 subunits composed of two heptameric rings stacked back-to-back. Interacts with the co-chaperonin GroES.

Its subcellular location is the cytoplasm. It carries out the reaction ATP + H2O + a folded polypeptide = ADP + phosphate + an unfolded polypeptide.. In terms of biological role, together with its co-chaperonin GroES, plays an essential role in assisting protein folding. The GroEL-GroES system forms a nano-cage that allows encapsulation of the non-native substrate proteins and provides a physical environment optimized to promote and accelerate protein folding. The chain is Chaperonin GroEL from Leifsonia xyli subsp. xyli (strain CTCB07).